The chain runs to 79 residues: Small ribosomal subunit protein bS16 (79 aa).

This sequence belongs to the bacterial ribosomal protein bS16 family.

The sequence is that of Small ribosomal subunit protein bS16 from Buchnera aphidicola subsp. Acyrthosiphon pisum (strain 5A).